The chain runs to 112 residues: Transmembrane protein 14C (112 aa).

Helical transmembrane passes span 7–27 (VVPL…GGII), 32–52 (AGSV…GLGA), 62–82 (VWVF…RFYH), and 88–108 (PAGL…VSMF).

Belongs to the TMEM14 family.

It is found in the mitochondrion membrane. In terms of biological role, required for normal heme biosynthesis. This is Transmembrane protein 14C (TMEM14C) from Homo sapiens (Human).